The primary structure comprises 363 residues: Small ribosomal subunit biogenesis GTPase RsgA (363 aa).

One can recognise a CP-type G domain in the interval 112–268 (HQQVIAANID…LIDTPGMREL (157 aa)). GTP-binding positions include 157–160 (TKAD) and 210–218 (GSSGAGKST). The Zn(2+) site is built by Cys291, Cys296, His298, and Cys304. Residues 340–363 (RVAQNNRGKGSGKRPASVDRPGRR) are disordered.

The protein belongs to the TRAFAC class YlqF/YawG GTPase family. RsgA subfamily. In terms of assembly, monomer. Associates with 30S ribosomal subunit, binds 16S rRNA. Zn(2+) serves as cofactor.

The protein resides in the cytoplasm. Its function is as follows. One of several proteins that assist in the late maturation steps of the functional core of the 30S ribosomal subunit. Helps release RbfA from mature subunits. May play a role in the assembly of ribosomal proteins into the subunit. Circularly permuted GTPase that catalyzes slow GTP hydrolysis, GTPase activity is stimulated by the 30S ribosomal subunit. This Xanthomonas euvesicatoria pv. vesicatoria (strain 85-10) (Xanthomonas campestris pv. vesicatoria) protein is Small ribosomal subunit biogenesis GTPase RsgA.